The sequence spans 84 residues: Small ribosomal subunit protein bS18 (84 aa).

It belongs to the bacterial ribosomal protein bS18 family. As to quaternary structure, part of the 30S ribosomal subunit. Forms a tight heterodimer with protein bS6.

Binds as a heterodimer with protein bS6 to the central domain of the 16S rRNA, where it helps stabilize the platform of the 30S subunit. This chain is Small ribosomal subunit protein bS18, found in Maricaulis maris (strain MCS10) (Caulobacter maris).